A 249-amino-acid chain; its full sequence is T-cell immunoreceptor with Ig and ITIM domains (249 aa).

The signal sequence occupies residues 1–28 (MHGWLLLVWVQGLIQAAFLATAIGATAG). Residues 29–127 (TIDTKRNISA…GGIYKGRIFL (99 aa)) enclose the Ig-like V-type domain. Residues 29–148 (TIDTKRNISA…LAQFQTAPLG (120 aa)) lie on the Extracellular side of the membrane. The interval 35–45 (NISAEEGGSVI) is homodimerization. C48 and C111 are oxidised to a cystine. N-linked (GlcNAc...) asparagine glycosylation occurs at N104. The chain crosses the membrane as a helical span at residues 149 to 169 (GTMAAVLGLICLMVTGVTVLA). Topologically, residues 170–249 (RKDKSIRMHS…ESFIAVSKTG (80 aa)) are cytoplasmic. The tract at residues 182–222 (SGLGRTEAEPQEWNLRSLSSPGSPVQTQTAPAGPCGEQAED) is disordered. A compositionally biased stretch (polar residues) spans 195 to 211 (NLRSLSSPGSPVQTQTA). Positions 234 to 239 (LSYRSL) match the ITIM motif motif.

Homodimer in cis; binds with high affinity to PVR, forming a heterotetrameric assembly of two TIGIT and two PVR molecules. Binds with lower affinity to NECTIN2 and NECTIN3. Interacts with GRB2. Interacts with NECTIN4.

It is found in the cell membrane. Functionally, inhibitory receptor that plays a role in the modulation of immune responses. Suppresses T-cell activation by promoting the generation of mature immunoregulatory dendritic cells. Upon binding to its ligands PVR/CD155 or NECTIN2/CD112, which are expressed on antigen-presenting cells, sends inhibitory signals to the T-cell or NK cell. Mechanistically, interaction with ligand leads to phosphorylation of the cytoplasmic tail by Src family tyrosine kinases such as FYN or LCK, allowing subsequent binding to adapter GRB2 and SHIP1/INPP5D. In turn, inhibits PI3K and MAPK signaling cascades. In addition, associates with beta-arrestin-2/ARRB2 to recruit SHIP1/INPP5D that suppresses autoubiquitination of TRAF6 and subsequently inhibits NF-kappa-B signaling pathway. Also acts as a receptor for NECTIN4 to inhibit NK cell cytotoxicity. This is T-cell immunoreceptor with Ig and ITIM domains from Mus musculus (Mouse).